A 402-amino-acid polypeptide reads, in one-letter code: Apolipoprotein L3 (402 aa).

Belongs to the apolipoprotein L family. As to expression, widely expressed; the highest levels are in prostate, lung and placenta; also detected in kidney, bone marrow, spleen, thymus, spinal cord, adrenal gland, salivary gland, trachea and mammary gland; levels are low in brain, heart, fetal liver, pancreas and testis.

The protein localises to the cytoplasm. In terms of biological role, may affect the movement of lipids in the cytoplasm or allow the binding of lipids to organelles. The protein is Apolipoprotein L3 (APOL3) of Homo sapiens (Human).